Reading from the N-terminus, the 184-residue chain is uncharacterized protein (184 aa).

Residues 5–27 traverse the membrane as a helical segment; sequence YLLATAMFLIVCVYVISETVNLH.

It is found in the membrane. This is an uncharacterized protein from Methanocaldococcus jannaschii (strain ATCC 43067 / DSM 2661 / JAL-1 / JCM 10045 / NBRC 100440) (Methanococcus jannaschii).